The following is a 216-amino-acid chain: Large ribosomal subunit protein uL3 (216 aa).

Residues 137–158 are disordered; it reads GASHGAHKNHRKPGSIGGASTP.

This sequence belongs to the universal ribosomal protein uL3 family. In terms of assembly, part of the 50S ribosomal subunit. Forms a cluster with proteins L14 and L19.

Its function is as follows. One of the primary rRNA binding proteins, it binds directly near the 3'-end of the 23S rRNA, where it nucleates assembly of the 50S subunit. This Pseudarthrobacter chlorophenolicus (strain ATCC 700700 / DSM 12829 / CIP 107037 / JCM 12360 / KCTC 9906 / NCIMB 13794 / A6) (Arthrobacter chlorophenolicus) protein is Large ribosomal subunit protein uL3.